Reading from the N-terminus, the 123-residue chain is Large ribosomal subunit protein bL17 (123 aa).

Belongs to the bacterial ribosomal protein bL17 family. In terms of assembly, part of the 50S ribosomal subunit. Contacts protein L32.

This is Large ribosomal subunit protein bL17 from Borrelia hermsii (strain HS1 / DAH).